A 50-amino-acid chain; its full sequence is Photosystem II reaction center protein M (50 aa).

The helical transmembrane segment at 7 to 27 (GFVASLLFVGVPTIFLIGLFI) threads the bilayer.

This sequence belongs to the PsbM family. PSII is composed of 1 copy each of membrane proteins PsbA, PsbB, PsbC, PsbD, PsbE, PsbF, PsbH, PsbI, PsbJ, PsbK, PsbL, PsbM, PsbT, PsbX, PsbY, Psb30/Ycf12, peripheral proteins PsbO, CyanoQ (PsbQ), PsbU, PsbV and a large number of cofactors. It forms dimeric complexes.

It is found in the cellular thylakoid membrane. In terms of biological role, one of the components of the core complex of photosystem II (PSII). PSII is a light-driven water:plastoquinone oxidoreductase that uses light energy to abstract electrons from H(2)O, generating O(2) and a proton gradient subsequently used for ATP formation. It consists of a core antenna complex that captures photons, and an electron transfer chain that converts photonic excitation into a charge separation. This subunit is found at the monomer-monomer interface. In Prochlorococcus marinus (strain MIT 9301), this protein is Photosystem II reaction center protein M.